A 372-amino-acid polypeptide reads, in one-letter code: Ligninase LG3 (372 aa).

The first 21 residues, 1-21 (MAFKQLFAAISLALSLSAANA), serve as a signal peptide directing secretion. Positions 22–28 (AAVIEKR) are excised as a propeptide. 2 cysteine pairs are disulfide-bonded: Cys-31-Cys-43 and Cys-62-Cys-148. His-75 functions as the Proton acceptor in the catalytic mechanism. Positions 76, 94, 96, and 98 each coordinate Ca(2+). Heme b is bound at residue His-204. The Ca(2+) site is built by Ser-205, Asp-222, Thr-224, Ile-227, and Asp-229. Cysteines 277 and 345 form a disulfide. The N-linked (GlcNAc...) asparagine glycan is linked to Asn-285. Over residues 350–361 (FPTLTTLPGPET) the composition is skewed to low complexity. The disordered stretch occupies residues 350-372 (FPTLTTLPGPETSVQRIPPPPGA).

It belongs to the peroxidase family. Ligninase subfamily. The cofactor is heme b. It depends on Ca(2+) as a cofactor.

The catalysed reaction is 1-(3,4-dimethoxyphenyl)-2-(2-methoxyphenoxy)propane-1,3-diol + H2O2 = 3,4-dimethoxybenzaldehyde + guaiacol + glycolaldehyde + H2O. It catalyses the reaction 2 (3,4-dimethoxyphenyl)methanol + H2O2 = 2 (3,4-dimethoxyphenyl)methanol radical + 2 H2O. Its pathway is secondary metabolite metabolism; lignin degradation. Its function is as follows. Depolymerization of lignin. Catalyzes the C(alpha)-C(beta) cleavage of the propyl side chains of lignin. The chain is Ligninase LG3 (GLG3) from Phanerodontia chrysosporium (White-rot fungus).